We begin with the raw amino-acid sequence, 931 residues long: Synaptopodin (931 aa).

Disordered regions lie at residues 56 to 78 and 113 to 243; these read EEEGTSKSRVNHGTPPLSRAPAI and ASVS…MEGY. Ser134 carries the phosphoserine modification. Positions 136–148 are enriched in basic and acidic residues; that stretch reads TEKDLKEAKERSQ. Polar residues-rich tracts occupy residues 153–164 and 188–200; these read QLTTPPSSNSRG and PKLSQEALQTGHP. Phosphoserine occurs at positions 202, 222, and 258. Over residues 214 to 232 the composition is skewed to low complexity; it reads PTSPSKPGSPKHSSSQSPS. Residues 280–420 are disordered; that stretch reads GLHLSQNRET…SSSGPPAADL (141 aa). 2 stretches are compositionally biased toward polar residues: residues 282–293 and 309–370; these read HLSQNRETQQSS and INQN…NTPS. Residues 373–384 are compositionally biased toward basic and acidic residues; that stretch reads DGQRPVPAEEVR. Residues Ser490 and Ser514 each carry the phosphoserine modification. Disordered regions lie at residues 542 to 591 and 691 to 711; these read RRPL…KGQV and SPRIQAKPKPKPNQNLSEASG. A Phosphothreonine modification is found at Thr549. The short motif at 551-554 is the PPxY motif element; sequence PPTY. Polar residues predominate over residues 556–568; sequence ETLSTAPVASQVR. The residue at position 569 (Ser569) is a Phosphoserine. Residues 569–580 show a composition bias toward low complexity; that stretch reads SPPSYSTLYPSS. A PPxY motif motif is present at residues 570-573; sequence PPSY. A phosphoserine mark is found at Ser691, Ser742, Ser746, and Ser767. Residue Thr771 is modified to Phosphothreonine. Positions 775-918 are disordered; that stretch reads SLYHGYLPEN…RPSFSTRNAG (144 aa). Low complexity predominate over residues 816–841; it reads SSRATSSRASSRTVSPRAASPAKPSS. Position 835 is a phosphoserine (Ser835). The residue at position 850 (Arg850) is an Omega-N-methylarginine. Ser856 bears the Phosphoserine mark. Over residues 874–895 the composition is skewed to polar residues; sequence VQDSLQPTAVSPTYSSDISPVS.

This sequence belongs to the synaptopodin family. As to quaternary structure, interacts with BAIAP1. Interacts with actin. Interacts (via PPxY motifs) with WWC1 (via WW domains). In terms of processing, O-glycosylated. As to expression, expressed at high levels in brain and at moderate, but still significant levels in the heart, skeletal muscle, lung and kidney. In brain, expressed in the cerebral cortex, hippocampus, olfactory bulb and striatum.

It localises to the cytoplasm. It is found in the cytoskeleton. Its subcellular location is the cell junction. The protein localises to the tight junction. The protein resides in the perikaryon. It localises to the cell projection. It is found in the dendritic spine. Its subcellular location is the postsynaptic density. The protein localises to the synapse. The protein resides in the cytosol. Its function is as follows. Actin-associated protein that may play a role in modulating actin-based shape and motility of dendritic spines and renal podocyte foot processes. Seems to be essential for the formation of spine apparatuses in spines of telencephalic neurons, which is involved in synaptic plasticity. The chain is Synaptopodin (Synpo) from Rattus norvegicus (Rat).